Consider the following 103-residue polypeptide: U-scoloptoxin(24)-Er1a (103 aa).

Residues 1 to 23 form the signal peptide; it reads MVKSLHCLIGIVLFLAILNAGNG.

It belongs to the scoloptoxin-24 family. In terms of processing, contains 1 disulfide bond. In terms of tissue distribution, expressed by the venom gland.

Its subcellular location is the secreted. The chain is U-scoloptoxin(24)-Er1a from Ethmostigmus rubripes (Giant centipede).